We begin with the raw amino-acid sequence, 427 residues long: Adenylosuccinate synthetase (427 aa).

Residues 12–18 and 40–42 each bind GTP; these read GDEGKGK and GHT. Residue D13 is the Proton acceptor of the active site. Mg(2+) is bound by residues D13 and G40. IMP-binding positions include 13–16, 38–41, T128, R142, Q223, T238, and R302; these read DEGK and NAGH. The Proton donor role is filled by H41. 298–304 lines the substrate pocket; it reads VTTGRAR. GTP is bound by residues R304, 330 to 332, and 412 to 414; these read KLD and GVG.

Belongs to the adenylosuccinate synthetase family. As to quaternary structure, homodimer. Mg(2+) serves as cofactor.

It is found in the cytoplasm. It catalyses the reaction IMP + L-aspartate + GTP = N(6)-(1,2-dicarboxyethyl)-AMP + GDP + phosphate + 2 H(+). It functions in the pathway purine metabolism; AMP biosynthesis via de novo pathway; AMP from IMP: step 1/2. Plays an important role in the de novo pathway of purine nucleotide biosynthesis. Catalyzes the first committed step in the biosynthesis of AMP from IMP. This is Adenylosuccinate synthetase from Frankia casuarinae (strain DSM 45818 / CECT 9043 / HFP020203 / CcI3).